Reading from the N-terminus, the 109-residue chain is ATP-dependent Clp protease adapter protein ClpS (109 aa).

The segment at 1-21 (MAERKQGGQNNGAGSSVITEV) is disordered.

It belongs to the ClpS family. In terms of assembly, binds to the N-terminal domain of the chaperone ClpA.

Its function is as follows. Involved in the modulation of the specificity of the ClpAP-mediated ATP-dependent protein degradation. The polypeptide is ATP-dependent Clp protease adapter protein ClpS (Caulobacter sp. (strain K31)).